A 393-amino-acid polypeptide reads, in one-letter code: Argininosuccinate synthase (393 aa).

Residues alanine 7 to serine 15 and alanine 34 contribute to the ATP site. Residues tyrosine 85 and serine 90 each contribute to the L-citrulline site. Residue glycine 115 coordinates ATP. Residues threonine 117, asparagine 121, and aspartate 122 each coordinate L-aspartate. Position 121 (asparagine 121) interacts with L-citrulline. Arginine 125, serine 176, serine 185, glutamate 261, and tyrosine 273 together coordinate L-citrulline.

It belongs to the argininosuccinate synthase family. Type 1 subfamily. Homotetramer.

The protein localises to the cytoplasm. The catalysed reaction is L-citrulline + L-aspartate + ATP = 2-(N(omega)-L-arginino)succinate + AMP + diphosphate + H(+). It participates in amino-acid biosynthesis; L-arginine biosynthesis; L-arginine from L-ornithine and carbamoyl phosphate: step 2/3. The protein is Argininosuccinate synthase of Ehrlichia chaffeensis (strain ATCC CRL-10679 / Arkansas).